We begin with the raw amino-acid sequence, 501 residues long: Proline--tRNA ligase (501 aa).

It belongs to the class-II aminoacyl-tRNA synthetase family. ProS type 3 subfamily. In terms of assembly, homodimer.

Its subcellular location is the cytoplasm. The enzyme catalyses tRNA(Pro) + L-proline + ATP = L-prolyl-tRNA(Pro) + AMP + diphosphate. Catalyzes the attachment of proline to tRNA(Pro) in a two-step reaction: proline is first activated by ATP to form Pro-AMP and then transferred to the acceptor end of tRNA(Pro). This is Proline--tRNA ligase from Halobacterium salinarum (strain ATCC 29341 / DSM 671 / R1).